The sequence spans 204 residues: Peptide deformylase (204 aa).

The Fe cation site is built by Cys131 and His174. The active site involves Glu175. His178 provides a ligand contact to Fe cation.

This sequence belongs to the polypeptide deformylase family. Requires Fe(2+) as cofactor.

The catalysed reaction is N-terminal N-formyl-L-methionyl-[peptide] + H2O = N-terminal L-methionyl-[peptide] + formate. In terms of biological role, removes the formyl group from the N-terminal Met of newly synthesized proteins. Requires at least a dipeptide for an efficient rate of reaction. N-terminal L-methionine is a prerequisite for activity but the enzyme has broad specificity at other positions. The protein is Peptide deformylase of Streptococcus gordonii (strain Challis / ATCC 35105 / BCRC 15272 / CH1 / DL1 / V288).